Reading from the N-terminus, the 98-residue chain is uncharacterized protein (98 aa).

Belongs to the CFAP97 family.

This is an uncharacterized protein from Homo sapiens (Human).